Reading from the N-terminus, the 306-residue chain is MKHFLTLRDFSKEEILSLVNHASELKKEPKKLLQDKTLAMIFEKNSTRTRMAFELAITELGGKALFLSSNDLQLSRGEPVKDTARVIGAMVDFVMMRVNKHETLLEFARYSKAPVINALSELYHPTQVLGDLLTIKEWNKMQNGIAKVAFIGDSNNMCNSWLIAAAILGFEFSIAIPKNYKISPEIWEFAMKQALISGAKISLSHDKFEALKDKDVVITDTWVSMGEENEKERKIKEFEGFMIDEKAMSVANKDAILLHCLPAYRGYEVSEEIFEKHADVIFEEARNRLYVVKALLCFLDNQRGRE.

Residues 46 to 49 (STRT), Q73, R97, and 124 to 127 (HPTQ) each bind carbamoyl phosphate. L-ornithine-binding positions include N156, D220, and 224–225 (SM). Carbamoyl phosphate contacts are provided by residues 260–261 (CL) and R288.

It belongs to the aspartate/ornithine carbamoyltransferase superfamily. OTCase family.

It localises to the cytoplasm. The catalysed reaction is carbamoyl phosphate + L-ornithine = L-citrulline + phosphate + H(+). It functions in the pathway amino-acid biosynthesis; L-arginine biosynthesis; L-arginine from L-ornithine and carbamoyl phosphate: step 1/3. In terms of biological role, reversibly catalyzes the transfer of the carbamoyl group from carbamoyl phosphate (CP) to the N(epsilon) atom of ornithine (ORN) to produce L-citrulline. In Campylobacter jejuni subsp. jejuni serotype O:23/36 (strain 81-176), this protein is Ornithine carbamoyltransferase.